A 123-amino-acid chain; its full sequence is UPF0426 protein At1g28150, chloroplastic (123 aa).

The transit peptide at Met1–Ser26 directs the protein to the chloroplast. The disordered stretch occupies residues Ser97–Glu123. Over residues Thr100–Glu123 the composition is skewed to acidic residues.

This sequence belongs to the UPF0426 family.

Its subcellular location is the plastid. It localises to the chloroplast. The protein localises to the plastoglobule. This chain is UPF0426 protein At1g28150, chloroplastic, found in Arabidopsis thaliana (Mouse-ear cress).